The following is a 967-amino-acid chain: Haze protective factor 1 (967 aa).

Residues 1-23 form the signal peptide; sequence MFNRFNKLQAALALVLYSQSALG. Asparagine 28 and asparagine 35 each carry an N-linked (GlcNAc...) asparagine glycan. The tract at residues 72–301 is disordered; that stretch reads SSSTEVSSSI…STSSASTASG (230 aa). Tandem repeats lie at residues 93–105, 106–118, 119–131, 132–144, 153–165, 166–178, 179–191, 192–204, and 205–217. The 13 X approximate repeats, Ser-rich stretch occupies residues 93 to 278; it reads SITSSGSSVS…QSGSSVSGSS (186 aa). One copy of the 1-10; approximate repeat lies at 218 to 230; it reads SATESGSASSVPS. Residues 234 to 247 form a 1-11; approximate repeat; that stretch reads SVTESGSSSSASES. The stretch at 248–259 is one 1-12; approximate repeat; that stretch reads SITQSGTASGSS. One copy of the 1-13 repeat lies at 266-278; it reads SVTQSGSSVSGSS. N-linked (GlcNAc...) asparagine glycans are attached at residues asparagine 493, asparagine 601, and asparagine 638. A run of 4 repeats spans residues 745–780, 781–815, 816–854, and 855–893. Residues 745-902 are 4.5 X approximate tandem repeats, Thr-rich; the sequence is SSKSYTTVTV…ASPKSYTTVT (158 aa). Residues 836-857 form a disordered region; the sequence is KTVTSEAPKETSETSETSAAPK. Residues 894–902 form a 2-5; truncated repeat; the sequence is SPKSYTTVT. Alanine 946 is lipidated: GPI-anchor amidated alanine. The propeptide at 947 to 967 is removed in mature form; it reads AGLNANTLNALVGIFVLAFFN.

The protein belongs to the SRP1/TIP1 family. In terms of processing, the GPI-anchor is attached to the protein in the endoplasmic reticulum and serves to target the protein to the cell surface. There, the glucosamine-inositol phospholipid moiety is cleaved off and the GPI-modified mannoprotein is covalently attached via its lipidless GPI glycan remnant to the 1,6-beta-glucan of the outer cell wall layer.

It localises to the secreted. The protein resides in the cell wall. Its subcellular location is the membrane. Functionally, involved in cell wall organization and biosynthesis. The polypeptide is Haze protective factor 1 (HPF1) (Saccharomyces cerevisiae (strain ATCC 204508 / S288c) (Baker's yeast)).